A 530-amino-acid chain; its full sequence is Calcium uptake protein 3, mitochondrial (530 aa).

A mitochondrion-targeting transit peptide spans 1–43 (MAALRRLLWPPPRVSPPLCAHQPLLGPWGRPAVTTLGLPGRPF). The segment at 92–115 (GSPATGRPSKSAATEPEDPPRGRG) is disordered. The 36-residue stretch at 232–267 (KPHAGFRIAFNMFDTDGNEMVDKKEFLVLQEIFRKK) folds into the EF-hand 1 domain. Ca(2+) contacts are provided by Asp-245, Asp-247, Asn-249, Met-251, Asp-253, and Glu-256. One can recognise an EF-hand 2; degenerate domain in the interval 401 to 436 (VENTSVFLENVRYSIPEEKGITFDEFRSFFQFLNNL). An EF-hand 3 domain is found at 470 to 505 (FSPHLVNTVFKIFDVDKDDQLSYKEFIGIMKDRLHR). Ca(2+)-binding residues include Asp-483, Asp-485, Asp-487, Gln-489, and Glu-494.

Belongs to the MICU1 family. MICU3 subfamily. As to quaternary structure, heterodimer; disulfide-linked; heterodimerizes with MICU1. Component of the uniplex complex, composed of MCU, EMRE/SMDT1, MICU1 and MICU3 in a 4:4:1:1 stoichiometry. In terms of tissue distribution, specifically expressed in the central nervous system and skeletal muscle.

It localises to the mitochondrion intermembrane space. Its subcellular location is the mitochondrion inner membrane. In terms of biological role, tissue-specific calcium sensor of the mitochondrial calcium uniporter (MCU) channel, which specifically regulates MCU channel activity in the central nervous system and skeletal muscle. Senses calcium level via its EF-hand domains: compared to MICU1 and MICU2, MICU3 has a higher affinity for calcium. MICU1 and MICU3 form a disulfide-linked heterodimer that stimulates and inhibits MCU activity, depending on the concentration of calcium. At low calcium levels, MICU1 occludes the pore of the MCU channel, preventing mitochondrial calcium uptake. At higher calcium levels, calcium-binding to MICU1 and MICU3 induces a conformational change that weakens MCU-MICU1 interactions and moves the MICU1-MICU3 heterodimer away from the pore, allowing calcium permeation through the MCU channel. The high calcium affinity of MICU3 lowers the calcium threshold necessary for calcium permeation through the MCU channel. The MICU1-MICU3 heterodimer promotes flexibility of neurotransmission in neuronal cells by enhancing mitochondrial calcium uptake in presynapses. It is also required to increase mitochondrial calcium uptake in skeletal muscle cells, thereby increasing ATP production. The protein is Calcium uptake protein 3, mitochondrial of Homo sapiens (Human).